Here is a 199-residue protein sequence, read N- to C-terminus: MIKYLSTNISLYFQENNSCLSKKDVLKIQYTLEAILSDLSKFIIIFLVFLFIKEIPLFLFSFIILNSTRPLLGGIHCKTYYGCLTCSILYFMIILLFTRLFPELNTNFYIVFFILSLAITFIFAPCPNEKRPVKNKATLKILSLISLTFWIILFYLSPLQTRNCILISIFLQIIQVIIINTKGVIFNAKNNKTFFNRTT.

Transmembrane regions (helical) follow at residues 43–63 (IIIFLVFLFIKEIPLFLFSFI), 81–101 (YGCLTCSILYFMIILLFTRLF), 108–128 (FYIVFFILSLAITFIFAPCPN), 139–159 (LKILSLISLTFWIILFYLSPL), and 165–185 (ILISIFLQIIQVIIINTKGVI).

It belongs to the AgrB family.

It is found in the cell membrane. Its function is as follows. May be involved in the proteolytic processing of a quorum sensing system signal molecule precursor. The chain is Putative AgrB-like protein (cfg02) from Clostridium beijerinckii (Clostridium MP).